A 522-amino-acid polypeptide reads, in one-letter code: MQEELAWETDGLLPLERQLHEAARQNNVGRMQELIGRRVNTRARNHVGRVALHWAAGAGHEQAVRLLLEHEAAVDEEDAVGALTEARLCFGMNALLLSAWFGHLRILQILVNSGAKIHCESKDGLTLLHCAAQKGHVPVLAFIMEDLEDVALDHVDKLGRTAFHRAAEHGQLDALDFLVGSGCDHNVKDKEGNTALHLAAGRGHMAVLQRLVDIGLDLEEQNAEGLTALHSAAGGSHPDCVQLLLRAGSTVNALTQKNLSCLHYAALSGSEDVSRVLIHAGGCANVVDHQGASPLHLAVRHNFPALVRLLINSDSDVNAVDNRQQTPLHLAAEHAWQDIADMLLIAGVDLNLRDKQGKTALAVAVRSNHVSLVDMIIKADRFYRWEKDHPSDPSGKSLSFKQDHRQETQQLRSVLWRLASRYLQPREWKKLAYSWEFTEAHVDAIEQQWTGTRSYQEHGHRMLLIWLHGVATAGENPSKALFEGLVAIGRRDLAGWSTMARSQLTATSASRVQMILVPQPPE.

ANK repeat units lie at residues 14–43, 47–76, 90–119, 123–152, 158–187, 191–220, 224–253, 257–286, 290–319, 323–352, and 356–385; these read PLER…NTRA, VGRV…AVDE, FGMN…KIHC, DGLT…DVAL, LGRT…DHNV, EGNT…DLEE, EGLT…TVNA, KNLS…CANV, QGAS…DVNA, RQQT…DLNL, and QGKT…FYRW. The 89-residue stretch at 413-501 folds into the Death domain; sequence SVLWRLASRY…DLAGWSTMAR (89 aa).

This chain is Ankyrin repeat and death domain-containing protein 1A (ANKDD1A), found in Homo sapiens (Human).